Reading from the N-terminus, the 102-residue chain is Thioredoxin (102 aa).

The region spanning Met-1 to Gln-102 is the Thioredoxin domain. A disulfide bridge connects residues Cys-28 and Cys-31.

Belongs to the thioredoxin family.

In terms of biological role, participates in various redox reactions through the reversible oxidation of its active center dithiol to a disulfide and catalyzes dithiol-disulfide exchange reactions. This Chlamydia trachomatis serovar D (strain ATCC VR-885 / DSM 19411 / UW-3/Cx) protein is Thioredoxin (trxA).